A 195-amino-acid polypeptide reads, in one-letter code: uncharacterized protein (195 aa).

Residues 1-16 (MIRTIIVFMLLTISFG) form the signal peptide.

This is an uncharacterized protein from Acanthamoeba polyphaga mimivirus (APMV).